The primary structure comprises 149 residues: Transcriptional repressor NrdR (149 aa).

Residues 3–34 fold into a zinc finger; sequence CPFCAAEETKVVDSRLAADGYQIRRRRECTSC. The 91-residue stretch at 49-139 folds into the ATP-cone domain; sequence PYVIKNNGNR…VYLSFDDIEE (91 aa).

Belongs to the NrdR family. The cofactor is Zn(2+).

Functionally, negatively regulates transcription of bacterial ribonucleotide reductase nrd genes and operons by binding to NrdR-boxes. This Actinobacillus pleuropneumoniae serotype 5b (strain L20) protein is Transcriptional repressor NrdR.